The chain runs to 170 residues: Probable deoxyuridine 5'-triphosphate nucleotidohydrolase (170 aa).

Belongs to the dCTP deaminase family. Archaeal dUTPase subfamily.

It catalyses the reaction dUTP + H2O = dUMP + diphosphate + H(+). Its pathway is pyrimidine metabolism; dUMP biosynthesis; dUMP from dCTP (dUTP route): step 2/2. In terms of biological role, this enzyme is involved in nucleotide metabolism: it produces dUMP, the immediate precursor of thymidine nucleotides and it decreases the intracellular concentration of dUTP so that uracil cannot be incorporated into DNA. This chain is Probable deoxyuridine 5'-triphosphate nucleotidohydrolase, found in Methanococcoides burtonii (strain DSM 6242 / NBRC 107633 / OCM 468 / ACE-M).